The sequence spans 1111 residues: Myosin IB heavy chain (1111 aa).

The Myosin motor domain occupies 9–691 (QGTDDLVMLP…TVFLLEEALD (683 aa)). An ATP-binding site is contributed by 102–109 (GESGAGKT). Phosphoserine is present on Ser-332. Residues 547–627 (GSLQKKRPTT…GFAYRNTFDK (81 aa)) form an actin-binding region. The TH1 domain occupies 729–913 (KERQRNSIDR…KGLIGTIASG (185 aa)). The interval 910–1058 (IASGLPSSTD…PAPQPSRPTA (149 aa)) is disordered. A compositionally biased stretch (polar residues) spans 914 to 928 (LPSSTDSTPKNYNPN). 3 stretches are compositionally biased toward low complexity: residues 929-944 (SMSQ…QSAG), 952-967 (GAGQ…QQRP), and 991-1012 (PMGA…LPQP). The span at 1017 to 1040 (GAPGGRGAPMGRGAPGGGPAGAGG) shows a compositional bias: gly residues. The 59-residue stretch at 1053-1111 (PSRPTAKALYDYDASSTDELSFKEGDIIFIVQKDNGGWTQGELKSGQKGWAPTNYLQYN) folds into the SH3 domain.

The protein belongs to the TRAFAC class myosin-kinesin ATPase superfamily. Myosin family. Myosin I heavy chain is single-headed. Dimer of a heavy and a light chain. Inability to self-assemble into filaments.

It localises to the cell projection. The protein localises to the pseudopodium. Its subcellular location is the cytoplasm. The protein resides in the cell cortex. In terms of biological role, myosin is a protein that binds to actin and has ATPase activity that is activated by actin. Myosin IB may have a role in chemotaxis and aggregation; it could serve to stabilize and even retract cortical structures, such as pseudopods and lamellopods. Involved in the whole cell motility of aggregation-stages cells. Overexpression results in significant decrease in the rate of cellular translocation and fluid-phase pinocytosis and abnormalities in the normal rearrangement of the actin cytoskeleton. The sequence is that of Myosin IB heavy chain (myoB) from Dictyostelium discoideum (Social amoeba).